A 121-amino-acid chain; its full sequence is Small ribosomal subunit protein uS13 (121 aa).

A disordered region spans residues 91 to 121; that stretch reads HRRGLPVRGQNTKNNARTRKGPRKTVANKKK. The span at 106–121 shows a compositional bias: basic residues; sequence ARTRKGPRKTVANKKK.

The protein belongs to the universal ribosomal protein uS13 family. As to quaternary structure, part of the 30S ribosomal subunit. Forms a loose heterodimer with protein S19. Forms two bridges to the 50S subunit in the 70S ribosome.

In terms of biological role, located at the top of the head of the 30S subunit, it contacts several helices of the 16S rRNA. In the 70S ribosome it contacts the 23S rRNA (bridge B1a) and protein L5 of the 50S subunit (bridge B1b), connecting the 2 subunits; these bridges are implicated in subunit movement. Contacts the tRNAs in the A and P-sites. The chain is Small ribosomal subunit protein uS13 from Lysinibacillus sphaericus (strain C3-41).